We begin with the raw amino-acid sequence, 447 residues long: uncharacterized protein (447 aa).

The disordered stretch occupies residues 39 to 76; that stretch reads PQAAPYTRNNGMGECRRGHRQGHRAEVHDNRPADKVGQ. A compositionally biased stretch (basic and acidic residues) spans 61–72; sequence HRAEVHDNRPAD.

It belongs to the 3-oxoacid CoA-transferase subunit A family.

This is an uncharacterized protein from Archaeoglobus fulgidus (strain ATCC 49558 / DSM 4304 / JCM 9628 / NBRC 100126 / VC-16).